The primary structure comprises 318 residues: Replication factor C small subunit (318 aa).

43–50 (GPAGTGKT) contacts ATP.

It belongs to the activator 1 small subunits family. RfcS subfamily. Heteromultimer composed of small subunits (RfcS) and large subunits (RfcL).

Part of the RFC clamp loader complex which loads the PCNA sliding clamp onto DNA. The chain is Replication factor C small subunit from Picrophilus torridus (strain ATCC 700027 / DSM 9790 / JCM 10055 / NBRC 100828 / KAW 2/3).